We begin with the raw amino-acid sequence, 373 residues long: Queuine tRNA-ribosyltransferase (373 aa).

The active-site Proton acceptor is the Asp89. Substrate contacts are provided by residues 89–93, Asp143, Gln192, and Gly220; that span reads DSGGF. The RNA binding stretch occupies residues 251–257; sequence GVGTPED. The active-site Nucleophile is Asp270. An RNA binding; important for wobble base 34 recognition region spans residues 275–279; sequence TRNAR. Zn(2+) contacts are provided by Cys308, Cys310, Cys313, and His339.

The protein belongs to the queuine tRNA-ribosyltransferase family. In terms of assembly, homodimer. Within each dimer, one monomer is responsible for RNA recognition and catalysis, while the other monomer binds to the replacement base PreQ1. Requires Zn(2+) as cofactor.

It catalyses the reaction 7-aminomethyl-7-carbaguanine + guanosine(34) in tRNA = 7-aminomethyl-7-carbaguanosine(34) in tRNA + guanine. It functions in the pathway tRNA modification; tRNA-queuosine biosynthesis. In terms of biological role, catalyzes the base-exchange of a guanine (G) residue with the queuine precursor 7-aminomethyl-7-deazaguanine (PreQ1) at position 34 (anticodon wobble position) in tRNAs with GU(N) anticodons (tRNA-Asp, -Asn, -His and -Tyr). Catalysis occurs through a double-displacement mechanism. The nucleophile active site attacks the C1' of nucleotide 34 to detach the guanine base from the RNA, forming a covalent enzyme-RNA intermediate. The proton acceptor active site deprotonates the incoming PreQ1, allowing a nucleophilic attack on the C1' of the ribose to form the product. After dissociation, two additional enzymatic reactions on the tRNA convert PreQ1 to queuine (Q), resulting in the hypermodified nucleoside queuosine (7-(((4,5-cis-dihydroxy-2-cyclopenten-1-yl)amino)methyl)-7-deazaguanosine). The sequence is that of Queuine tRNA-ribosyltransferase from Aliarcobacter butzleri (strain RM4018) (Arcobacter butzleri).